A 103-amino-acid polypeptide reads, in one-letter code: MLNDLYEEIKKRKEQPKEGSYTNYLFEKGLDKILKKVGEETTEVIIASKNNNQELVNEVADLTYHLLVLLAEKNVSLSSVQAELERREGKLSTTRDRKEIDEL.

The tract at residues 79–103 (SVQAELERREGKLSTTRDRKEIDEL) is disordered. The segment covering 83–103 (ELERREGKLSTTRDRKEIDEL) has biased composition (basic and acidic residues).

It belongs to the PRA-PH family.

Its subcellular location is the cytoplasm. The catalysed reaction is 1-(5-phospho-beta-D-ribosyl)-ATP + H2O = 1-(5-phospho-beta-D-ribosyl)-5'-AMP + diphosphate + H(+). It participates in amino-acid biosynthesis; L-histidine biosynthesis; L-histidine from 5-phospho-alpha-D-ribose 1-diphosphate: step 2/9. The protein is Phosphoribosyl-ATP pyrophosphatase of Listeria welshimeri serovar 6b (strain ATCC 35897 / DSM 20650 / CCUG 15529 / CIP 8149 / NCTC 11857 / SLCC 5334 / V8).